The chain runs to 196 residues: Adenosylcobinamide-phosphate guanylyltransferase (196 aa).

Homodimer.

The enzyme catalyses adenosylcob(III)inamide phosphate + GTP + H(+) = adenosylcob(III)inamide-GDP + diphosphate. It participates in cofactor biosynthesis; adenosylcobalamin biosynthesis. In terms of biological role, guanylyltransferase that catalyzes the synthesis of adenosylcobinamide-GDP (AdoCbi-GDP) from adenosylcobinamide-phosphate (AdoCbi-P) and GTP. Is involved in adenosylcobalamin biosynthesis. Binds one GTP per dimer. Cannot use other NTPs or GDP. Does not display AdoCbi kinase activity. Is also able to catalyze the condensation of 2-phospho-L-lactate (LP) with GTP in vitro to form PPi and (2S)-lactyl-2-diphospho-5'-guanosine (LPPG), but is much less efficient than CofC, the presumed enzyme catalyzing this reaction in vivo. The sequence is that of Adenosylcobinamide-phosphate guanylyltransferase (cobY) from Methanocaldococcus jannaschii (strain ATCC 43067 / DSM 2661 / JAL-1 / JCM 10045 / NBRC 100440) (Methanococcus jannaschii).